A 585-amino-acid polypeptide reads, in one-letter code: MNKSVKKKIKDEINVIVTNLALSNNIKLDNININIQKPPKSDLGDISILMFEIGKTLKLPIEIISEEIIKNLKTKYEIKAVGPYLNIKISRKEYINNTIQMVNTQKDTYGTSKYLDNKKIILEFSSPNTNKPLHVGHLRNDVIGESLSRILKAVGAKITKINLINDRGVHICKSMLAYKKFGNGITPEKAFKKGDHLIGDFYVKYNKYSQENENAEKEIQDLLLLWEQKDVSTIELWKKLNKWAIEGIKETYEITNTSFDKIYLESEIFKIGKNVVLEGLEKGFCYKREDGAICIDLPSDSDEKADTKVKQKVLIRSNGTSIYLTQDLGNIAVRTKEFNFEEMIYVVGSEQIQHFKSLFFVAEKLGLSKNKKLIHLSHGMVNLVDGKMKSREGNVIDADNLISNLIELIIPEMTQKIENKESAKKNALNIALGAIHYYLLKSAIHKDIVFNKKESLSFTGNSGPYIQYVGARINSILEKYKALSIPVMEKIDFELLKHEKEWEIIKIISELEENIINAAKDLNPSILTSYSYSLAKHFSTYYQEVKVIDTNNINLTAARIEFLKAILQTIKNCMYLLNIPYMLKM.

The short motif at 127–137 is the 'HIGH' region element; the sequence is PNTNKPLHVGH.

This sequence belongs to the class-I aminoacyl-tRNA synthetase family. As to quaternary structure, monomer.

Its subcellular location is the cytoplasm. The enzyme catalyses tRNA(Arg) + L-arginine + ATP = L-arginyl-tRNA(Arg) + AMP + diphosphate. The chain is Arginine--tRNA ligase (argS) from Borreliella burgdorferi (strain ATCC 35210 / DSM 4680 / CIP 102532 / B31) (Borrelia burgdorferi).